Reading from the N-terminus, the 578-residue chain is 15-cis-phytoene desaturase, chloroplastic/chromoplastic (578 aa).

The N-terminal 87 residues, 1–87 (MDTGCLSSMN…PLENTINFLE (87 aa)), are a transit peptide targeting the chloroplast and chromoplast. FAD is bound by residues Ala-115, 134-135 (EA), Lys-142, 159-160 (HI), and Tyr-165. Residue Arg-300 participates in substrate binding. Ile-342 and Asp-531 together coordinate FAD. Ala-539 serves as a coordination point for substrate. Met-541 contacts FAD.

It belongs to the carotenoid/retinoid oxidoreductase family. Homotetramer. Homotetramer is the active form of the enzyme. The cofactor is FAD.

Its subcellular location is the plastid. The protein localises to the chloroplast. It is found in the chromoplast. The protein resides in the membrane. The catalysed reaction is 2 a plastoquinone + 15-cis-phytoene = 9,9',15-tri-cis-zeta-carotene + 2 a plastoquinol. The protein operates within carotenoid biosynthesis; lycopene biosynthesis. Inhibited by the herbicide norflurazon (NFZ). Functionally, converts phytoene into zeta-carotene via the intermediary of phytofluene by the symmetrical introduction of two double bonds at the C-11 and C-11' positions of phytoene with a concomitant isomerization of two neighboring double bonds at the C9 and C9' positions from trans to cis. Active with decylplastoquinone (DPQ) as substrate. Also active with other benzoquinones, which are strongly preferred over naphthoquinones as substrates. The sequence is that of 15-cis-phytoene desaturase, chloroplastic/chromoplastic (PDS1) from Oryza sativa subsp. indica (Rice).